Consider the following 192-residue polypeptide: Small ribosomal subunit protein uS5 (192 aa).

The S5 DRBM domain maps to 20-83 (FVDRLVHINR…EAAKRGLIRV (64 aa)). The interval 165 to 192 (ARRGLKVSALQARRRDAEPGSADSADAA) is disordered.

It belongs to the universal ribosomal protein uS5 family. As to quaternary structure, part of the 30S ribosomal subunit. Contacts proteins S4 and S8.

In terms of biological role, with S4 and S12 plays an important role in translational accuracy. Its function is as follows. Located at the back of the 30S subunit body where it stabilizes the conformation of the head with respect to the body. The polypeptide is Small ribosomal subunit protein uS5 (Methylobacterium sp. (strain 4-46)).